The following is a 171-amino-acid chain: Small ribosomal subunit protein uS13 (171 aa).

Residues 128 to 171 form a disordered region; that stretch reads HERGQKVRGQRTKSTGRTEGTIGVNVEAIKEEQAEDDAADGGEE. Positions 160-171 are enriched in acidic residues; the sequence is QAEDDAADGGEE.

This sequence belongs to the universal ribosomal protein uS13 family. In terms of assembly, part of the 30S ribosomal subunit. Forms a loose heterodimer with protein S19. Forms two bridges to the 50S subunit in the 70S ribosome.

Its function is as follows. Located at the top of the head of the 30S subunit, it contacts several helices of the 16S rRNA. In the 70S ribosome it contacts the 23S rRNA (bridge B1a) and protein L5 of the 50S subunit (bridge B1b), connecting the 2 subunits; these bridges are implicated in subunit movement. This Halobacterium salinarum (strain ATCC 700922 / JCM 11081 / NRC-1) (Halobacterium halobium) protein is Small ribosomal subunit protein uS13.